The primary structure comprises 600 residues: NADH-quinone oxidoreductase subunit C/D (600 aa).

Positions 1–190 (MVNNMTDLTA…SPFELTKAKQ (190 aa)) are NADH dehydrogenase I subunit C. Residues 214 to 600 (DFMFLNLGPN…IDFVMSDVDR (387 aa)) are NADH dehydrogenase I subunit D.

In the N-terminal section; belongs to the complex I 30 kDa subunit family. This sequence in the C-terminal section; belongs to the complex I 49 kDa subunit family. NDH-1 is composed of 13 different subunits. Subunits NuoB, CD, E, F, and G constitute the peripheral sector of the complex.

Its subcellular location is the cell inner membrane. It carries out the reaction a quinone + NADH + 5 H(+)(in) = a quinol + NAD(+) + 4 H(+)(out). Its function is as follows. NDH-1 shuttles electrons from NADH, via FMN and iron-sulfur (Fe-S) centers, to quinones in the respiratory chain. The immediate electron acceptor for the enzyme in this species is believed to be ubiquinone. Couples the redox reaction to proton translocation (for every two electrons transferred, four hydrogen ions are translocated across the cytoplasmic membrane), and thus conserves the redox energy in a proton gradient. This is NADH-quinone oxidoreductase subunit C/D from Escherichia coli (strain ATCC 8739 / DSM 1576 / NBRC 3972 / NCIMB 8545 / WDCM 00012 / Crooks).